The chain runs to 341 residues: Ketol-acid reductoisomerase (NADP(+)) (341 aa).

The KARI N-terminal Rossmann domain occupies 2-182 (AKIYYNDDAD…GGTRAGVIET (181 aa)). NADP(+)-binding positions include 25–28 (YGSQ), Ser-51, Ser-53, and 83–86 (DQVQ). Residue His-108 is part of the active site. Gly-134 is an NADP(+) binding site. The 146-residue stretch at 183 to 328 (TFTEETESDL…RKLRSLFAWE (146 aa)) folds into the KARI C-terminal knotted domain. Mg(2+) contacts are provided by Asp-191, Glu-195, Glu-227, and Glu-231. Ser-252 is a binding site for substrate.

Belongs to the ketol-acid reductoisomerase family. Requires Mg(2+) as cofactor.

The catalysed reaction is (2R)-2,3-dihydroxy-3-methylbutanoate + NADP(+) = (2S)-2-acetolactate + NADPH + H(+). It carries out the reaction (2R,3R)-2,3-dihydroxy-3-methylpentanoate + NADP(+) = (S)-2-ethyl-2-hydroxy-3-oxobutanoate + NADPH + H(+). Its pathway is amino-acid biosynthesis; L-isoleucine biosynthesis; L-isoleucine from 2-oxobutanoate: step 2/4. It functions in the pathway amino-acid biosynthesis; L-valine biosynthesis; L-valine from pyruvate: step 2/4. Involved in the biosynthesis of branched-chain amino acids (BCAA). Catalyzes an alkyl-migration followed by a ketol-acid reduction of (S)-2-acetolactate (S2AL) to yield (R)-2,3-dihydroxy-isovalerate. In the isomerase reaction, S2AL is rearranged via a Mg-dependent methyl migration to produce 3-hydroxy-3-methyl-2-ketobutyrate (HMKB). In the reductase reaction, this 2-ketoacid undergoes a metal-dependent reduction by NADPH to yield (R)-2,3-dihydroxy-isovalerate. The sequence is that of Ketol-acid reductoisomerase (NADP(+)) from Kocuria rhizophila (strain ATCC 9341 / DSM 348 / NBRC 103217 / DC2201).